The following is a 295-amino-acid chain: Proline-rich proteoglycan 2 (295 aa).

An N-terminal signal peptide occupies residues 1–16 (MLVVLLTAALLVLSSA). A disordered region spans residues 16 to 295 (AQGVDEEVVY…QSSFLWSFSA (280 aa)). The span at 26–41 (EDSSQQLELEQQSQGH) shows a compositional bias: low complexity. Positions 48-58 (PPPGGLPPRPP) are enriched in pro residues. Over residues 62-78 (ENGDGDDNDDGDDDGSG) the composition is skewed to acidic residues. 2 stretches are compositionally biased toward pro residues: residues 100 to 187 (PPPA…PPGG) and 194 to 278 (QGPP…PQGP).

Contains glycosaminoglycans of chondroitin-sulfate and heparan types.

It is found in the secreted. The polypeptide is Proline-rich proteoglycan 2 (Prpg2) (Rattus norvegicus (Rat)).